Reading from the N-terminus, the 396-residue chain is Peroxisome proliferator-activated receptor delta (396 aa).

Residues 1–24 are disordered; that stretch reads MKEEIPPRSPILDEQPSTPLEHQE. The span at 15 to 24 shows a compositional bias: polar residues; the sequence is QPSTPLEHQE. Positions 28–102 form a DNA-binding region, nuclear receptor; it reads SVDCKICGDR…LGMSHNAIRF (75 aa). 2 consecutive NR C4-type zinc fingers follow at residues 31–51 and 68–90; these read CKICGDRASGFHYGVHACEGC and CDRNCKIQKKNRNKCQYCRFNKC. The NR LBD domain occupies 166–394; sequence FVIHDMDTLW…HPLLQEIYRD (229 aa).

The protein belongs to the nuclear hormone receptor family. NR1 subfamily. In terms of assembly, heterodimer with the retinoid X receptor. Post-translationally, 'Lys-48'-linked polyubiquitinated; leading to proteasomal degradation. Deubiquitinated and stabilized by OTUD3. As to expression, ubiquitous.

The protein resides in the nucleus. Functionally, ligand-activated transcription factor key mediator of energy metabolism in adipose tissues. Receptor that binds peroxisome proliferators such as hypolipidemic drugs and fatty acids. Has a preference for poly-unsaturated fatty acids, such as gamma-linoleic acid and eicosapentanoic acid. Once activated by a ligand, the receptor binds to promoter elements of target genes. Regulates the peroxisomal beta-oxidation pathway of fatty acids. Functions as a transcription activator for the acyl-CoA oxidase gene. Decreases expression of NPC1L1 once activated by a ligand. The protein is Peroxisome proliferator-activated receptor delta (ppard) of Xenopus laevis (African clawed frog).